We begin with the raw amino-acid sequence, 144 residues long: Snake venom vascular endothelial growth factor toxin cratrin (144 aa).

The first 24 residues, 1–24 (MAVYLLAVAILFCIQGWPSGTVQG), serve as a signal peptide directing secretion. Residue Gln-25 is modified to Pyrrolidone carboxylic acid. 3 disulfide bridges follow: Cys-38-Cys-80, Cys-69-Cys-115, and Cys-73-Cys-117. Residues 119–144 (PRSTVNNGKRKKNPKEGEPRAKFPLV) are disordered. Positions 132 to 144 (PKEGEPRAKFPLV) are enriched in basic and acidic residues.

Belongs to the PDGF/VEGF growth factor family. Snake venom VEGF subfamily. In terms of assembly, homodimer; disulfide-linked. Interacts with VEGF receptor-1 (FLT1) with a high affinity, whereas it binds to VEGF receptor-2 (KDR) with a low affinity. Does not bind VEGF receptor-3 (FLT4). In terms of tissue distribution, expressed by the venom gland.

It localises to the secreted. Its function is as follows. Snake venom VEGFs that may contribute to venom dispersion and prey subjugation by inducing vascular permeability and hypotension. This protein induces an increase in capillary permeability after intradermal injection, as well as a drastic hypotensive effect after intravenous injection. The hypotension is mediated by nitric oxide (NO), which is produced by VEGF-activated endothelium NO synthase. Also induces angiogenesis in vitro. Like other crotalid VEGFs, this protein interacts with VEGF receptor-1 (FLT1) with a high affinity, whereas it binds to VEGF receptor-2 (KDR) with a low affinity. This is Snake venom vascular endothelial growth factor toxin cratrin from Crotalus atrox (Western diamondback rattlesnake).